A 236-amino-acid chain; its full sequence is 2-C-methyl-D-erythritol 4-phosphate cytidylyltransferase (236 aa).

This sequence belongs to the IspD/TarI cytidylyltransferase family. IspD subfamily. As to quaternary structure, homodimer.

It catalyses the reaction 2-C-methyl-D-erythritol 4-phosphate + CTP + H(+) = 4-CDP-2-C-methyl-D-erythritol + diphosphate. It participates in isoprenoid biosynthesis; isopentenyl diphosphate biosynthesis via DXP pathway; isopentenyl diphosphate from 1-deoxy-D-xylulose 5-phosphate: step 2/6. Its function is as follows. Catalyzes the formation of 4-diphosphocytidyl-2-C-methyl-D-erythritol from CTP and 2-C-methyl-D-erythritol 4-phosphate (MEP). The chain is 2-C-methyl-D-erythritol 4-phosphate cytidylyltransferase from Salmonella agona (strain SL483).